The primary structure comprises 395 residues: Phosphoglycerate kinase (395 aa).

Residues 21–23 (DFN), Arg-36, 59–62 (HLGR), Arg-120, and Arg-153 contribute to the substrate site. Residues Lys-203, Gly-294, Glu-325, and 351–354 (GGDS) contribute to the ATP site.

Belongs to the phosphoglycerate kinase family. As to quaternary structure, monomer.

It localises to the cytoplasm. The catalysed reaction is (2R)-3-phosphoglycerate + ATP = (2R)-3-phospho-glyceroyl phosphate + ADP. It participates in carbohydrate degradation; glycolysis; pyruvate from D-glyceraldehyde 3-phosphate: step 2/5. The sequence is that of Phosphoglycerate kinase from Finegoldia magna (strain ATCC 29328 / DSM 20472 / WAL 2508) (Peptostreptococcus magnus).